The primary structure comprises 266 residues: 2-C-methyl-D-erythritol 4-phosphate cytidylyltransferase (266 aa).

The segment at 229–266 (NRDCGPGTRDPESAHPQSSVSASAFSGPGSRAPGPEEI) is disordered. The segment covering 243–252 (HPQSSVSASA) has biased composition (polar residues).

Belongs to the IspD/TarI cytidylyltransferase family. IspD subfamily.

The enzyme catalyses 2-C-methyl-D-erythritol 4-phosphate + CTP + H(+) = 4-CDP-2-C-methyl-D-erythritol + diphosphate. It functions in the pathway isoprenoid biosynthesis; isopentenyl diphosphate biosynthesis via DXP pathway; isopentenyl diphosphate from 1-deoxy-D-xylulose 5-phosphate: step 2/6. Catalyzes the formation of 4-diphosphocytidyl-2-C-methyl-D-erythritol from CTP and 2-C-methyl-D-erythritol 4-phosphate (MEP). This chain is 2-C-methyl-D-erythritol 4-phosphate cytidylyltransferase, found in Xanthomonas axonopodis pv. citri (strain 306).